The primary structure comprises 291 residues: 3-methyl-2-oxobutanoate hydroxymethyltransferase (291 aa).

Over residues 1–10 (MTQLSAAQTP) the composition is skewed to polar residues. A disordered region spans residues 1-20 (MTQLSAAQTPQPKPADGNRA). The Mg(2+) site is built by Asp-71 and Asp-110. Residues 71–72 (DS), Asp-110, and Lys-140 contribute to the 3-methyl-2-oxobutanoate site. Glu-142 is a binding site for Mg(2+). Catalysis depends on Glu-208, which acts as the Proton acceptor.

Belongs to the PanB family. As to quaternary structure, homodecamer; pentamer of dimers. Mg(2+) serves as cofactor.

It localises to the cytoplasm. It catalyses the reaction 3-methyl-2-oxobutanoate + (6R)-5,10-methylene-5,6,7,8-tetrahydrofolate + H2O = 2-dehydropantoate + (6S)-5,6,7,8-tetrahydrofolate. Its pathway is cofactor biosynthesis; (R)-pantothenate biosynthesis; (R)-pantoate from 3-methyl-2-oxobutanoate: step 1/2. Catalyzes the reversible reaction in which hydroxymethyl group from 5,10-methylenetetrahydrofolate is transferred onto alpha-ketoisovalerate to form ketopantoate. The protein is 3-methyl-2-oxobutanoate hydroxymethyltransferase of Streptomyces coelicolor (strain ATCC BAA-471 / A3(2) / M145).